The chain runs to 91 residues: Small ribosomal subunit protein uS19 (91 aa).

It belongs to the universal ribosomal protein uS19 family.

Protein S19 forms a complex with S13 that binds strongly to the 16S ribosomal RNA. This chain is Small ribosomal subunit protein uS19, found in Alcanivorax borkumensis (strain ATCC 700651 / DSM 11573 / NCIMB 13689 / SK2).